The primary structure comprises 378 residues: Chaperone protein DnaJ (378 aa).

Residues 5 to 70 (DFYEVLGLSK…QKRAAYDQYG (66 aa)) form the J domain. Residues 133–211 (GITKEIRIPT…CHGDGRVERY (79 aa)) form a CR-type zinc finger. Zn(2+)-binding residues include Cys146, Cys149, Cys163, Cys166, Cys185, Cys188, Cys199, and Cys202. CXXCXGXG motif repeat units lie at residues 146 to 153 (CDKCHGSG), 163 to 170 (CSTCHGAG), 185 to 192 (CPTCHGRG), and 199 to 206 (CSKCHGDG).

The protein belongs to the DnaJ family. In terms of assembly, homodimer. The cofactor is Zn(2+).

The protein resides in the cytoplasm. Participates actively in the response to hyperosmotic and heat shock by preventing the aggregation of stress-denatured proteins and by disaggregating proteins, also in an autonomous, DnaK-independent fashion. Unfolded proteins bind initially to DnaJ; upon interaction with the DnaJ-bound protein, DnaK hydrolyzes its bound ATP, resulting in the formation of a stable complex. GrpE releases ADP from DnaK; ATP binding to DnaK triggers the release of the substrate protein, thus completing the reaction cycle. Several rounds of ATP-dependent interactions between DnaJ, DnaK and GrpE are required for fully efficient folding. Also involved, together with DnaK and GrpE, in the DNA replication of plasmids through activation of initiation proteins. The polypeptide is Chaperone protein DnaJ (Proteus mirabilis (strain HI4320)).